The following is a 126-amino-acid chain: Glycine cleavage system H protein (126 aa).

Residues 22–103 enclose the Lipoyl-binding domain; it reads KAYIGITDYA…PYGSWMALVE (82 aa). At lysine 63 the chain carries N6-lipoyllysine.

This sequence belongs to the GcvH family. The glycine cleavage system is composed of four proteins: P, T, L and H. It depends on (R)-lipoate as a cofactor.

Functionally, the glycine cleavage system catalyzes the degradation of glycine. The H protein shuttles the methylamine group of glycine from the P protein to the T protein. This chain is Glycine cleavage system H protein, found in Thermoanaerobacter pseudethanolicus (strain ATCC 33223 / 39E) (Clostridium thermohydrosulfuricum).